The primary structure comprises 240 residues: Ubiquinone biosynthesis O-methyltransferase (240 aa).

4 residues coordinate S-adenosyl-L-methionine: R44, G64, D85, and M129.

Belongs to the methyltransferase superfamily. UbiG/COQ3 family.

It carries out the reaction a 3-demethylubiquinol + S-adenosyl-L-methionine = a ubiquinol + S-adenosyl-L-homocysteine + H(+). The enzyme catalyses a 3-(all-trans-polyprenyl)benzene-1,2-diol + S-adenosyl-L-methionine = a 2-methoxy-6-(all-trans-polyprenyl)phenol + S-adenosyl-L-homocysteine + H(+). Its pathway is cofactor biosynthesis; ubiquinone biosynthesis. Its function is as follows. O-methyltransferase that catalyzes the 2 O-methylation steps in the ubiquinone biosynthetic pathway. The protein is Ubiquinone biosynthesis O-methyltransferase of Escherichia coli O8 (strain IAI1).